The chain runs to 636 residues: 1-deoxy-D-xylulose-5-phosphate synthase (636 aa).

Residues His-74 and 115–117 (GHA) contribute to the thiamine diphosphate site. Residue Asp-146 coordinates Mg(2+). Thiamine diphosphate-binding positions include 147-148 (GA), Asn-175, Tyr-285, and Glu-368. Asn-175 lines the Mg(2+) pocket.

Belongs to the transketolase family. DXPS subfamily. As to quaternary structure, homodimer. Mg(2+) is required as a cofactor. Thiamine diphosphate serves as cofactor.

The enzyme catalyses D-glyceraldehyde 3-phosphate + pyruvate + H(+) = 1-deoxy-D-xylulose 5-phosphate + CO2. It functions in the pathway metabolic intermediate biosynthesis; 1-deoxy-D-xylulose 5-phosphate biosynthesis; 1-deoxy-D-xylulose 5-phosphate from D-glyceraldehyde 3-phosphate and pyruvate: step 1/1. Its function is as follows. Catalyzes the acyloin condensation reaction between C atoms 2 and 3 of pyruvate and glyceraldehyde 3-phosphate to yield 1-deoxy-D-xylulose-5-phosphate (DXP). In Anaeromyxobacter dehalogenans (strain 2CP-C), this protein is 1-deoxy-D-xylulose-5-phosphate synthase.